The sequence spans 60 residues: Large ribosomal subunit protein bL32 (60 aa).

The interval 1-21 is disordered; it reads MAVPARHTSKAKKNKRRTHYK. The segment covering 7–20 has biased composition (basic residues); it reads HTSKAKKNKRRTHY.

This sequence belongs to the bacterial ribosomal protein bL32 family.

In Streptococcus uberis (strain ATCC BAA-854 / 0140J), this protein is Large ribosomal subunit protein bL32.